The primary structure comprises 110 residues: MEALATHRHARTSAQKARLVADQIRGLHVEKALELLAYSPKKSADLIKKVLESAIANAEHNEGADIDELTVSKVFVDEGPTMKRIKPRAKGRADRIFKRSSHITVVVADN.

It belongs to the universal ribosomal protein uL22 family. As to quaternary structure, part of the 50S ribosomal subunit.

Functionally, this protein binds specifically to 23S rRNA; its binding is stimulated by other ribosomal proteins, e.g. L4, L17, and L20. It is important during the early stages of 50S assembly. It makes multiple contacts with different domains of the 23S rRNA in the assembled 50S subunit and ribosome. The globular domain of the protein is located near the polypeptide exit tunnel on the outside of the subunit, while an extended beta-hairpin is found that lines the wall of the exit tunnel in the center of the 70S ribosome. This Pseudoalteromonas atlantica (strain T6c / ATCC BAA-1087) protein is Large ribosomal subunit protein uL22.